Here is an 83-residue protein sequence, read N- to C-terminus: Sulfur carrier protein TusA (83 aa).

C20 acts as the Cysteine persulfide intermediate in catalysis.

Belongs to the sulfur carrier protein TusA family.

It localises to the cytoplasm. In terms of biological role, sulfur carrier protein which probably makes part of a sulfur-relay system. This is Sulfur carrier protein TusA from Pseudomonas fluorescens (strain SBW25).